Consider the following 388-residue polypeptide: Succinate--CoA ligase [ADP-forming] subunit beta (388 aa).

The ATP-grasp domain maps to 9 to 244; the sequence is KQLFARYGMP…PSQEDAREAH (236 aa). ATP contacts are provided by residues K46, 53–55, E99, T102, and E107; that span reads GRG. Mg(2+) contacts are provided by N199 and D213. Residues N264 and 321–323 each bind substrate; that span reads GIV.

It belongs to the succinate/malate CoA ligase beta subunit family. As to quaternary structure, heterotetramer of two alpha and two beta subunits. It depends on Mg(2+) as a cofactor.

It carries out the reaction succinate + ATP + CoA = succinyl-CoA + ADP + phosphate. It catalyses the reaction GTP + succinate + CoA = succinyl-CoA + GDP + phosphate. Its pathway is carbohydrate metabolism; tricarboxylic acid cycle; succinate from succinyl-CoA (ligase route): step 1/1. In terms of biological role, succinyl-CoA synthetase functions in the citric acid cycle (TCA), coupling the hydrolysis of succinyl-CoA to the synthesis of either ATP or GTP and thus represents the only step of substrate-level phosphorylation in the TCA. The beta subunit provides nucleotide specificity of the enzyme and binds the substrate succinate, while the binding sites for coenzyme A and phosphate are found in the alpha subunit. In Yersinia pseudotuberculosis serotype O:1b (strain IP 31758), this protein is Succinate--CoA ligase [ADP-forming] subunit beta.